The chain runs to 118 residues: Small ribosomal subunit protein uS13 (118 aa).

Residues 92 to 118 (RRSLPVRGQRTKTNARTRKGPRKPIKK) are disordered.

The protein belongs to the universal ribosomal protein uS13 family. In terms of assembly, part of the 30S ribosomal subunit. Forms a loose heterodimer with protein S19. Forms two bridges to the 50S subunit in the 70S ribosome.

Functionally, located at the top of the head of the 30S subunit, it contacts several helices of the 16S rRNA. In the 70S ribosome it contacts the 23S rRNA (bridge B1a) and protein L5 of the 50S subunit (bridge B1b), connecting the 2 subunits; these bridges are implicated in subunit movement. Contacts the tRNAs in the A and P-sites. This chain is Small ribosomal subunit protein uS13, found in Acinetobacter baumannii (strain AB307-0294).